The sequence spans 165 residues: MTIAVYPASFDPITNGHLDVAARASRLFDELVLAVAHRPYKKLLFTTEQRIAMIRESVAHLPNVRVDAFSSLVVEYALEIGATVLVRGLRAATDFEHEFQMAHINHHLAPTLDTVCLMADQRFTLLSSSAVREIAAYGGDVSSFVPAHIALALKQAYQTHEESRA.

Ser-9 is a binding site for substrate. ATP contacts are provided by residues 9 to 10 (SF) and His-17. Substrate contacts are provided by Lys-41, Val-73, and Arg-87. Residues 88 to 90 (GLR), Glu-98, and 123 to 129 (FTLLSSS) each bind ATP.

Belongs to the bacterial CoaD family. In terms of assembly, homohexamer. Requires Mg(2+) as cofactor.

It localises to the cytoplasm. It catalyses the reaction (R)-4'-phosphopantetheine + ATP + H(+) = 3'-dephospho-CoA + diphosphate. Its pathway is cofactor biosynthesis; coenzyme A biosynthesis; CoA from (R)-pantothenate: step 4/5. Functionally, reversibly transfers an adenylyl group from ATP to 4'-phosphopantetheine, yielding dephospho-CoA (dPCoA) and pyrophosphate. This Herpetosiphon aurantiacus (strain ATCC 23779 / DSM 785 / 114-95) protein is Phosphopantetheine adenylyltransferase.